The chain runs to 1222 residues: Chitin synthase 4 (1222 aa).

The segment at 1-108 is disordered; sequence MSLPERPGGI…NRIDKDHPNY (108 aa). Over residues 51-68 the composition is skewed to polar residues; that stretch reads LSANSFAETIPSPNNSFV. A glycan (N-linked (GlcNAc...) asparagine) is linked at asparagine 64. A compositionally biased stretch (basic and acidic residues) spans 94-107; that stretch reads IRPERNRIDKDHPN. N-linked (GlcNAc...) asparagine glycosylation occurs at asparagine 116. Positions 136–199 are disordered; it reads TTDVSGSRSQ…KSTKKRSTPQ (64 aa). Residues 137-154 are compositionally biased toward polar residues; the sequence is TDVSGSRSQTLDGVSDTS. The segment covering 176–196 has biased composition (basic residues); it reads SAKRVSRHKSGKITKSTKKRS. 2 consecutive transmembrane segments (helical) span residues 204–224 and 242–262; these read PPSF…DFML and MGLI…TFGF. 2 N-linked (GlcNAc...) asparagine glycosylation sites follow: asparagine 378 and asparagine 418. The chain crosses the membrane as a helical span at residues 509–529; the sequence is YVFLALILSVVGSRFVLALIF. The disordered stretch occupies residues 595–662; the sequence is RFSTVYGPDR…PPSDGPGPAG (68 aa). A compositionally biased stretch (polar residues) spans 608–643; that stretch reads NKRVPTTMASSGGSGSQLLHPNSMYRQGNDSRSSFL. N-linked (GlcNAc...) asparagine glycosylation is found at asparagine 636 and asparagine 1031. A run of 3 helical transmembrane segments spans residues 1056-1076, 1090-1110, and 1116-1136; these read FIVF…AFTF, VIPL…IVIT, and YLVW…VLPV. A disordered region spans residues 1201–1222; sequence GGGNSWSMPPGHQYHDDYYSDA. Basic and acidic residues predominate over residues 1213–1222; it reads QYHDDYYSDA.

It belongs to the chitin synthase family. Class IV subfamily.

The protein resides in the cell membrane. It carries out the reaction [(1-&gt;4)-N-acetyl-beta-D-glucosaminyl](n) + UDP-N-acetyl-alpha-D-glucosamine = [(1-&gt;4)-N-acetyl-beta-D-glucosaminyl](n+1) + UDP + H(+). Functionally, polymerizes chitin, a structural polymer of the cell wall and septum, by transferring the sugar moiety of UDP-GlcNAc to the non-reducing end of the growing chitin polymer. Plays a role in cell wall integrity and is involved in tolerance to hyperosmotic conditions. Required to successfully penetrate the host plants and thus plays a key role in pathogenicity. The sequence is that of Chitin synthase 4 from Verticillium dahliae (strain VdLs.17 / ATCC MYA-4575 / FGSC 10137) (Verticillium wilt).